Reading from the N-terminus, the 449-residue chain is Phosphoglucosamine mutase (449 aa).

Serine 101 functions as the Phosphoserine intermediate in the catalytic mechanism. Residues serine 101, aspartate 242, aspartate 244, and aspartate 246 each coordinate Mg(2+). Serine 101 is modified (phosphoserine).

The protein belongs to the phosphohexose mutase family. Mg(2+) serves as cofactor. Activated by phosphorylation.

It carries out the reaction alpha-D-glucosamine 1-phosphate = D-glucosamine 6-phosphate. In terms of biological role, catalyzes the conversion of glucosamine-6-phosphate to glucosamine-1-phosphate. The sequence is that of Phosphoglucosamine mutase from Bradyrhizobium sp. (strain BTAi1 / ATCC BAA-1182).